The chain runs to 20 residues: Ribosome-inactivating protein (20 aa).

Residues 1–20 (NVRFDLSGATSSSYKTFIKN) are disordered. Over residues 8-20 (GATSSSYKTFIKN) the composition is skewed to polar residues.

Belongs to the ribosome-inactivating protein family. Type 1 RIP subfamily.

The catalysed reaction is Endohydrolysis of the N-glycosidic bond at one specific adenosine on the 28S rRNA.. The polypeptide is Ribosome-inactivating protein (Cucurbita pepo (Vegetable marrow)).